The chain runs to 207 residues: Small ribosomal subunit protein uS4c (207 aa).

The S4 RNA-binding domain maps to 92-156 (MRLDNILFRL…YQSIITKRIE (65 aa)).

It belongs to the universal ribosomal protein uS4 family. As to quaternary structure, part of the 30S ribosomal subunit. Contacts protein S5. The interaction surface between S4 and S5 is involved in control of translational fidelity.

The protein resides in the plastid. Its subcellular location is the chloroplast. Its function is as follows. One of the primary rRNA binding proteins, it binds directly to 16S rRNA where it nucleates assembly of the body of the 30S subunit. With S5 and S12 plays an important role in translational accuracy. The sequence is that of Small ribosomal subunit protein uS4c (rps4) from Equisetum sylvaticum (Wood horsetail).